The chain runs to 751 residues: Ribosome biogenesis protein ERB1 (751 aa).

Disordered stretches follow at residues M1–P140 and S289–D336. Composition is skewed to acidic residues over residues L34–D92 and I119–T129. Residues S294–P305 show a composition bias toward pro residues. Basic and acidic residues predominate over residues E323–D336. 6 WD repeats span residues H410–R449, P536–K580, I582–Q621, P622–K661, Y665–T704, and T720–S751.

Belongs to the WD repeat BOP1/ERB1 family. Component of the NOP7 complex, composed of ERB1, NOP7 and YTM1. The complex is held together by ERB1, which interacts with NOP7 via its N-terminal domain and with YTM1 via a high-affinity interaction between the seven-bladed beta-propeller domains of the 2 proteins. The NOP7 complex associates with the 66S pre-ribosome.

It is found in the nucleus. Its subcellular location is the nucleolus. It localises to the nucleoplasm. Its function is as follows. Component of the NOP7 complex, which is required for maturation of the 25S and 5.8S ribosomal RNAs and formation of the 60S ribosome. The chain is Ribosome biogenesis protein ERB1 from Coprinopsis cinerea (strain Okayama-7 / 130 / ATCC MYA-4618 / FGSC 9003) (Inky cap fungus).